Reading from the N-terminus, the 62-residue chain is Cecropin-D (62 aa).

An N-terminal signal peptide occupies residues 1 to 22 (MNFTKILFFVVACVFAMRTVSA). Positions 23 to 24 (AP) are cleaved as a propeptide — removed by a dipeptidylpeptidase. Lysine 60 is subject to Lysine amide.

This sequence belongs to the cecropin family.

The protein resides in the secreted. Its function is as follows. Cecropins have lytic and antibacterial activity against several Gram-positive and Gram-negative bacteria. This is Cecropin-D from Hyalophora cecropia (Cecropia moth).